The following is a 121-amino-acid chain: Cell division protein FtsB (121 aa).

At 1–6 the chain is on the cytoplasmic side; the sequence is MRNWRW. Residues 7 to 24 traverse the membrane as a helical segment; sequence LLLVLAVLLAWLQYRFWF. Topologically, residues 25–121 are periplasmic; that stretch reads GPGNSGEVMM…PEPVDPVDHP (97 aa). Residues 31–66 adopt a coiled-coil conformation; the sequence is EVMMLEAQVAHQTQDNEGLRQRNQALAAEVKDLKDG. The segment at 98 to 121 is disordered; that stretch reads APASAEASAPAQQAPEPVDPVDHP. The span at 99 to 113 shows a compositional bias: low complexity; that stretch reads PASAEASAPAQQAPE.

This sequence belongs to the FtsB family. As to quaternary structure, part of a complex composed of FtsB, FtsL and FtsQ.

The protein localises to the cell inner membrane. Functionally, essential cell division protein. May link together the upstream cell division proteins, which are predominantly cytoplasmic, with the downstream cell division proteins, which are predominantly periplasmic. This Xanthomonas axonopodis pv. citri (strain 306) protein is Cell division protein FtsB.